A 397-amino-acid polypeptide reads, in one-letter code: Succinate--CoA ligase [ADP-forming] subunit beta (397 aa).

The region spanning 9 to 254 (KALLRSYGAP…ETEEDPKELA (246 aa)) is the ATP-grasp domain. ATP is bound by residues Lys-46, 53-55 (GRG), Glu-109, Ser-112, and Glu-117. 2 residues coordinate Mg(2+): Asn-209 and Asp-223. Substrate contacts are provided by residues Asn-274 and 331–333 (GIM).

The protein belongs to the succinate/malate CoA ligase beta subunit family. As to quaternary structure, heterotetramer of two alpha and two beta subunits. Requires Mg(2+) as cofactor.

The catalysed reaction is succinate + ATP + CoA = succinyl-CoA + ADP + phosphate. It catalyses the reaction GTP + succinate + CoA = succinyl-CoA + GDP + phosphate. It functions in the pathway carbohydrate metabolism; tricarboxylic acid cycle; succinate from succinyl-CoA (ligase route): step 1/1. Its function is as follows. Succinyl-CoA synthetase functions in the citric acid cycle (TCA), coupling the hydrolysis of succinyl-CoA to the synthesis of either ATP or GTP and thus represents the only step of substrate-level phosphorylation in the TCA. The beta subunit provides nucleotide specificity of the enzyme and binds the substrate succinate, while the binding sites for coenzyme A and phosphate are found in the alpha subunit. This chain is Succinate--CoA ligase [ADP-forming] subunit beta, found in Cereibacter sphaeroides (strain ATCC 17029 / ATH 2.4.9) (Rhodobacter sphaeroides).